We begin with the raw amino-acid sequence, 1089 residues long: Pentatricopeptide repeat-containing protein MRL1, chloroplastic (1089 aa).

Residues 1-72 (MEVTSTTFIS…SIRSPRLVVR (72 aa)) constitute a chloroplast transit peptide. PPR repeat units lie at residues 466-500 (TMST…GMTA), 501-535 (DCKL…GVEA), 536-570 (NLHT…NVKP), 571-605 (DRVV…THPI), 608-642 (DHIS…GIRG), 643-677 (TPEV…DVTP), 678-712 (DEVF…GIRL), 713-747 (GTIS…KLRP), 748-782 (TIST…GLKP), and 783-817 (NTIT…GVSP).

Belongs to the PPR family. P subfamily. As to expression, expressed in stems, leaves and sepals.

The protein resides in the plastid. It is found in the chloroplast. In terms of biological role, regulator of the large subunit (LS) of RuBisCO. Involved either in the processing or in the stabilization of the processed transcript, probably by acting as a barrier to the 5'&gt;3' degradation. The sequence is that of Pentatricopeptide repeat-containing protein MRL1, chloroplastic (MRL1) from Arabidopsis thaliana (Mouse-ear cress).